We begin with the raw amino-acid sequence, 96 residues long: Aspartyl/glutamyl-tRNA(Asn/Gln) amidotransferase subunit C (96 aa).

Belongs to the GatC family. In terms of assembly, heterotrimer of A, B and C subunits.

It catalyses the reaction L-glutamyl-tRNA(Gln) + L-glutamine + ATP + H2O = L-glutaminyl-tRNA(Gln) + L-glutamate + ADP + phosphate + H(+). The catalysed reaction is L-aspartyl-tRNA(Asn) + L-glutamine + ATP + H2O = L-asparaginyl-tRNA(Asn) + L-glutamate + ADP + phosphate + 2 H(+). In terms of biological role, allows the formation of correctly charged Asn-tRNA(Asn) or Gln-tRNA(Gln) through the transamidation of misacylated Asp-tRNA(Asn) or Glu-tRNA(Gln) in organisms which lack either or both of asparaginyl-tRNA or glutaminyl-tRNA synthetases. The reaction takes place in the presence of glutamine and ATP through an activated phospho-Asp-tRNA(Asn) or phospho-Glu-tRNA(Gln). The chain is Aspartyl/glutamyl-tRNA(Asn/Gln) amidotransferase subunit C from Geobacillus kaustophilus (strain HTA426).